The chain runs to 526 residues: GMP synthase [glutamine-hydrolyzing] (526 aa).

A Glutamine amidotransferase type-1 domain is found at 9-208 (RILILDFGSQ…VKDICGCECL (200 aa)). Cysteine 86 acts as the Nucleophile in catalysis. Catalysis depends on residues histidine 182 and glutamate 184. Positions 209–401 (WTPATIIDDA…LGLPYDMLYR (193 aa)) constitute a GMPS ATP-PPase domain. 236–242 (SGGVDSS) serves as a coordination point for ATP.

In terms of assembly, homodimer.

The catalysed reaction is XMP + L-glutamine + ATP + H2O = GMP + L-glutamate + AMP + diphosphate + 2 H(+). Its pathway is purine metabolism; GMP biosynthesis; GMP from XMP (L-Gln route): step 1/1. Functionally, catalyzes the synthesis of GMP from XMP. The chain is GMP synthase [glutamine-hydrolyzing] from Aeromonas salmonicida (strain A449).